Here is a 173-residue protein sequence, read N- to C-terminus: NADH-ubiquinone oxidoreductase chain 6 (173 aa).

Transmembrane regions (helical) follow at residues 1-21 (MTYVMSLFLLGLVLGLVAVAS), 25-45 (PYFGALSLVGVAAFGCGVLIW), 53-73 (LVLFLIYLGGMLVVFAYSAAL), 82-102 (LGSWPVVSVYFGYFFFVFGIL), and 142-162 (GVLLLGAWVLLLTLLVVLELV).

It belongs to the complex I subunit 6 family.

It is found in the mitochondrion membrane. It carries out the reaction a ubiquinone + NADH + 5 H(+)(in) = a ubiquinol + NAD(+) + 4 H(+)(out). Functionally, core subunit of the mitochondrial membrane respiratory chain NADH dehydrogenase (Complex I) that is believed to belong to the minimal assembly required for catalysis. Complex I functions in the transfer of electrons from NADH to the respiratory chain. The immediate electron acceptor for the enzyme is believed to be ubiquinone. This Tetraodon nigroviridis (Spotted green pufferfish) protein is NADH-ubiquinone oxidoreductase chain 6 (MT-ND6).